We begin with the raw amino-acid sequence, 476 residues long: Protein DETOXIFICATION 3 (476 aa).

A run of 12 helical transmembrane segments spans residues 35–55, 66–86, 117–137, 146–166, 185–205, 208–228, 260–280, 289–309, 331–351, 370–390, 402–422, and 433–453; these read AAPMAAVTIAQYLLPVISVMV, GVALATSFTNVSGFSILFGLA, IPICVLISVLWIYIEKLLISL, VAGSYALWLIPALFAHAFFIP, LTTLLFHIPVCWAFVYAFGLG, GAAMAISVSFWFYVVILSCYV, AAMVCLEWWLFELLILCSGLL, VLSICLTTASLHYVIPGGVAA, VLAGLCLWLVESAFFSTLLFT, VANLTPLLCLSFILDGFTAVL, IGALNNVVAYYLVGAPVGVYL, and LWCGVVVGSAVQAIILAFVTA.

This sequence belongs to the multi antimicrobial extrusion (MATE) (TC 2.A.66.1) family.

The protein resides in the membrane. The sequence is that of Protein DETOXIFICATION 3 from Arabidopsis thaliana (Mouse-ear cress).